We begin with the raw amino-acid sequence, 217 residues long: THAP domain-containing protein 2 (217 aa).

The segment at 1–80 (MPTNCAAAGC…LKMDAVPTIF (80 aa)) adopts a THAP-type zinc-finger fold. An HCFC1-binding motif (HBM) motif is present at residues 122–125 (EHSY).

The chain is THAP domain-containing protein 2 (Thap2) from Mus musculus (Mouse).